Consider the following 362-residue polypeptide: Phosphoserine aminotransferase (362 aa).

2 residues coordinate L-glutamate: serine 9 and arginine 42. Residues 76–77, tryptophan 102, threonine 153, aspartate 174, and glutamine 197 each bind pyridoxal 5'-phosphate; that span reads GR. Lysine 198 bears the N6-(pyridoxal phosphate)lysine mark. 239-240 is a pyridoxal 5'-phosphate binding site; it reads NT.

The protein belongs to the class-V pyridoxal-phosphate-dependent aminotransferase family. SerC subfamily. In terms of assembly, homodimer. It depends on pyridoxal 5'-phosphate as a cofactor.

It is found in the cytoplasm. The enzyme catalyses O-phospho-L-serine + 2-oxoglutarate = 3-phosphooxypyruvate + L-glutamate. It catalyses the reaction 4-(phosphooxy)-L-threonine + 2-oxoglutarate = (R)-3-hydroxy-2-oxo-4-phosphooxybutanoate + L-glutamate. It functions in the pathway amino-acid biosynthesis; L-serine biosynthesis; L-serine from 3-phospho-D-glycerate: step 2/3. The protein operates within cofactor biosynthesis; pyridoxine 5'-phosphate biosynthesis; pyridoxine 5'-phosphate from D-erythrose 4-phosphate: step 3/5. Catalyzes the reversible conversion of 3-phosphohydroxypyruvate to phosphoserine and of 3-hydroxy-2-oxo-4-phosphonooxybutanoate to phosphohydroxythreonine. This Escherichia coli O157:H7 protein is Phosphoserine aminotransferase.